We begin with the raw amino-acid sequence, 547 residues long: Methionine--tRNA ligase (547 aa).

The 'HIGH' region signature appears at Pro15 to His25. Zn(2+) is bound by residues Cys146, Cys149, Cys159, and Cys162. The 'KMSKS' region signature appears at Lys332–Ser336. Residue Lys335 coordinates ATP.

The protein belongs to the class-I aminoacyl-tRNA synthetase family. MetG type 1 subfamily. Monomer. Requires Zn(2+) as cofactor.

Its subcellular location is the cytoplasm. It carries out the reaction tRNA(Met) + L-methionine + ATP = L-methionyl-tRNA(Met) + AMP + diphosphate. Its function is as follows. Is required not only for elongation of protein synthesis but also for the initiation of all mRNA translation through initiator tRNA(fMet) aminoacylation. In Buchnera aphidicola subsp. Acyrthosiphon pisum (strain APS) (Acyrthosiphon pisum symbiotic bacterium), this protein is Methionine--tRNA ligase (metG).